A 245-amino-acid polypeptide reads, in one-letter code: Ureidoacrylate amidohydrolase RutB (245 aa).

The Proton acceptor role is filled by aspartate 41. Lysine 150 is a catalytic residue. Catalysis depends on cysteine 183, which acts as the Nucleophile.

Belongs to the isochorismatase family. RutB subfamily.

The catalysed reaction is (Z)-3-ureidoacrylate + H2O + H(+) = (Z)-3-aminoacrylate + NH4(+) + CO2. The enzyme catalyses (Z)-3-ureidoacrylate + H2O = (Z)-3-aminoacrylate + carbamate + H(+). It catalyses the reaction (Z)-2-methylureidoacrylate + H2O + H(+) = (Z)-2-methylaminoacrylate + NH4(+) + CO2. In terms of biological role, hydrolyzes ureidoacrylate to form aminoacrylate and carbamate. The carbamate hydrolyzes spontaneously, thereby releasing one of the nitrogen atoms of the pyrimidine ring as ammonia and one of its carbon atoms as CO2. The sequence is that of Ureidoacrylate amidohydrolase RutB from Pseudomonas savastanoi pv. phaseolicola (strain 1448A / Race 6) (Pseudomonas syringae pv. phaseolicola (strain 1448A / Race 6)).